Here is a 497-residue protein sequence, read N- to C-terminus: D-gluconate dehydratase (497 aa).

Glutamate 303 contributes to the Mg(2+) binding site. The Proton donor role is filled by histidine 305. Mg(2+) contacts are provided by glutamate 329 and glutamate 355. Histidine 405 (proton acceptor) is an active-site residue.

It belongs to the mandelate racemase/muconate lactonizing enzyme family. GaD subfamily. It depends on Mg(2+) as a cofactor.

The catalysed reaction is D-gluconate = 2-dehydro-3-deoxy-D-gluconate + H2O. Its pathway is carbohydrate acid metabolism; D-gluconate degradation. Its function is as follows. Involved in the degradation of glucose via the Entner-Doudoroff pathway. Catalyzes the dehydration of gluconate to produce 2-keto-3-deoxygluconate (KDG). It is not able to use D-galactonate as substrate. In Thermoproteus tenax, this protein is D-gluconate dehydratase (gad).